A 90-amino-acid polypeptide reads, in one-letter code: Major envelope protein (90 aa).

The helical transmembrane segment at 53 to 70 (AVSVVSWAVAAGLIGELI) threads the bilayer.

It localises to the virion membrane. In terms of biological role, essential for membrane formation. The polypeptide is Major envelope protein (P9) (Pseudomonas savastanoi pv. phaseolicola (Pseudomonas syringae pv. phaseolicola)).